The following is a 932-amino-acid chain: Protocadherin gamma-A2 (932 aa).

The signal sequence occupies residues 1–28 (MAALQKLPHCRKLFLLCFLLATLWEARA). 6 consecutive Cadherin domains span residues 29–133 (GQIR…APRF), 134–242 (GVEE…APVF), 243–347 (TQPE…APEF), 348–452 (YMTS…APAF), 453–562 (SRTS…PPEI), and 570–682 (DGST…EPSA). Residues 29-692 (GQIRYSVREE…KPNDSDLTLY (664 aa)) lie on the Extracellular side of the membrane. N-linked (GlcNAc...) asparagine glycosylation is found at Asn-419 and Asn-545. Asn-685 carries N-linked (GlcNAc...) asparagine glycosylation. A helical membrane pass occupies residues 693–713 (LVVAVAAVSCVFLAFVIVLLA). The Cytoplasmic segment spans residues 714–932 (HRLRRWHKSR…KKKSGKKEKK (219 aa)). 2 disordered regions span residues 798-841 (LEEE…WPNN) and 902-932 (ATLT…KEKK). The span at 806 to 841 (FSQQAPPNTDWRFSQAQRPGTSGSQNGDDTGTWPNN) shows a compositional bias: polar residues. A compositionally biased stretch (basic residues) spans 922 to 932 (NKKKSGKKEKK).

The protein localises to the cell membrane. Functionally, potential calcium-dependent cell-adhesion protein. May be involved in the establishment and maintenance of specific neuronal connections in the brain. This Pan troglodytes (Chimpanzee) protein is Protocadherin gamma-A2 (PCDHGA2).